Consider the following 206-residue polypeptide: Large ribosomal subunit protein uL4 (206 aa).

A disordered region spans residues 63–98 (MYRQKGTGRARHSSARAPQFRGGGKAHGPVPHSHAH). Residues 64–76 (YRQKGTGRARHSS) are compositionally biased toward basic residues.

It belongs to the universal ribosomal protein uL4 family. In terms of assembly, part of the 50S ribosomal subunit.

Its function is as follows. One of the primary rRNA binding proteins, this protein initially binds near the 5'-end of the 23S rRNA. It is important during the early stages of 50S assembly. It makes multiple contacts with different domains of the 23S rRNA in the assembled 50S subunit and ribosome. In terms of biological role, forms part of the polypeptide exit tunnel. The chain is Large ribosomal subunit protein uL4 from Chelativorans sp. (strain BNC1).